The primary structure comprises 283 residues: Diaminopimelate epimerase (283 aa).

Substrate contacts are provided by N14, Q47, and N67. C76 (proton donor) is an active-site residue. Residues 77 to 78 (GN), N164, N197, and 215 to 216 (ER) each bind substrate. C224 serves as the catalytic Proton acceptor. Substrate is bound at residue 225-226 (GT).

This sequence belongs to the diaminopimelate epimerase family. As to quaternary structure, homodimer.

It localises to the cytoplasm. It catalyses the reaction (2S,6S)-2,6-diaminopimelate = meso-2,6-diaminopimelate. Its pathway is amino-acid biosynthesis; L-lysine biosynthesis via DAP pathway; DL-2,6-diaminopimelate from LL-2,6-diaminopimelate: step 1/1. In terms of biological role, catalyzes the stereoinversion of LL-2,6-diaminopimelate (L,L-DAP) to meso-diaminopimelate (meso-DAP), a precursor of L-lysine and an essential component of the bacterial peptidoglycan. This is Diaminopimelate epimerase from Neisseria meningitidis serogroup A / serotype 4A (strain DSM 15465 / Z2491).